A 292-amino-acid polypeptide reads, in one-letter code: Elongation factor Ts (292 aa).

Residues 81-84 form an involved in Mg(2+) ion dislocation from EF-Tu region; sequence TDFV.

The protein belongs to the EF-Ts family.

Its subcellular location is the cytoplasm. Associates with the EF-Tu.GDP complex and induces the exchange of GDP to GTP. It remains bound to the aminoacyl-tRNA.EF-Tu.GTP complex up to the GTP hydrolysis stage on the ribosome. The protein is Elongation factor Ts of Psychromonas ingrahamii (strain DSM 17664 / CCUG 51855 / 37).